We begin with the raw amino-acid sequence, 168 residues long: Co-chaperone protein HscB homolog (168 aa).

One can recognise a J domain in the interval 5-77 (DYFSLFGLPS…MLRARYLCES (73 aa)).

This sequence belongs to the HscB family. As to quaternary structure, interacts with HscA and stimulates its ATPase activity.

Functionally, co-chaperone involved in the maturation of iron-sulfur cluster-containing proteins. Seems to help targeting proteins to be folded toward HscA. This Bordetella avium (strain 197N) protein is Co-chaperone protein HscB homolog.